We begin with the raw amino-acid sequence, 634 residues long: Chaperone protein HtpG (634 aa).

The segment at 1-342 (MSVETQKETL…SNDLSLNVSR (342 aa)) is a; substrate-binding. Positions 343-559 (EILQKDPVID…EQDLGLQMRQ (217 aa)) are b. Positions 560–634 (ILEASGQKVP…LNKLLVELSA (75 aa)) are c.

This sequence belongs to the heat shock protein 90 family. Homodimer.

Its subcellular location is the cytoplasm. Functionally, molecular chaperone. Has ATPase activity. This Pseudomonas aeruginosa (strain ATCC 15692 / DSM 22644 / CIP 104116 / JCM 14847 / LMG 12228 / 1C / PRS 101 / PAO1) protein is Chaperone protein HtpG.